The chain runs to 228 residues: Protein GrpE (228 aa).

Disordered stretches follow at residues 1–31 and 209–228; these read MADE…NRAA and GVSK…EGNG.

It belongs to the GrpE family. As to quaternary structure, homodimer.

Its subcellular location is the cytoplasm. Participates actively in the response to hyperosmotic and heat shock by preventing the aggregation of stress-denatured proteins, in association with DnaK and GrpE. It is the nucleotide exchange factor for DnaK and may function as a thermosensor. Unfolded proteins bind initially to DnaJ; upon interaction with the DnaJ-bound protein, DnaK hydrolyzes its bound ATP, resulting in the formation of a stable complex. GrpE releases ADP from DnaK; ATP binding to DnaK triggers the release of the substrate protein, thus completing the reaction cycle. Several rounds of ATP-dependent interactions between DnaJ, DnaK and GrpE are required for fully efficient folding. This Brucella anthropi (strain ATCC 49188 / DSM 6882 / CCUG 24695 / JCM 21032 / LMG 3331 / NBRC 15819 / NCTC 12168 / Alc 37) (Ochrobactrum anthropi) protein is Protein GrpE.